Here is a 196-residue protein sequence, read N- to C-terminus: Proteasome subunit beta 1 (196 aa).

A propeptide spans 1–6 (MEELPA) (removed in mature form; by autocatalysis). The active-site Nucleophile is the threonine 7.

This sequence belongs to the peptidase T1B family. The 20S proteasome core is composed of 14 alpha and 14 beta subunits that assemble into four stacked heptameric rings, resulting in a barrel-shaped structure. The two inner rings, each composed of seven catalytic beta subunits, are sandwiched by two outer rings, each composed of seven alpha subunits. The catalytic chamber with the active sites is on the inside of the barrel. Has a gated structure, the ends of the cylinder being occluded by the N-termini of the alpha-subunits. Is capped at one or both ends by the proteasome regulatory ATPase, PAN.

The protein resides in the cytoplasm. The enzyme catalyses Cleavage of peptide bonds with very broad specificity.. The formation of the proteasomal ATPase PAN-20S proteasome complex, via the docking of the C-termini of PAN into the intersubunit pockets in the alpha-rings, triggers opening of the gate for substrate entry. Interconversion between the open-gate and close-gate conformations leads to a dynamic regulation of the 20S proteasome proteolysis activity. Component of the proteasome core, a large protease complex with broad specificity involved in protein degradation. The polypeptide is Proteasome subunit beta 1 (Saccharolobus solfataricus (strain ATCC 35092 / DSM 1617 / JCM 11322 / P2) (Sulfolobus solfataricus)).